The primary structure comprises 218 residues: Probable transaldolase (218 aa).

K83 (schiff-base intermediate with substrate) is an active-site residue.

Belongs to the transaldolase family. Type 3B subfamily.

It localises to the cytoplasm. It catalyses the reaction D-sedoheptulose 7-phosphate + D-glyceraldehyde 3-phosphate = D-erythrose 4-phosphate + beta-D-fructose 6-phosphate. It participates in carbohydrate degradation; pentose phosphate pathway; D-glyceraldehyde 3-phosphate and beta-D-fructose 6-phosphate from D-ribose 5-phosphate and D-xylulose 5-phosphate (non-oxidative stage): step 2/3. Transaldolase is important for the balance of metabolites in the pentose-phosphate pathway. In Thermotoga petrophila (strain ATCC BAA-488 / DSM 13995 / JCM 10881 / RKU-1), this protein is Probable transaldolase.